The chain runs to 467 residues: Fumarate hydratase class II (467 aa).

Residues 98 to 100 (SGT), R126, 129 to 132 (HPND), 139 to 141 (SSN), and T187 contribute to the substrate site. H188 serves as the catalytic Proton donor/acceptor. S318 is an active-site residue. Substrate contacts are provided by residues S319 and 324-326 (KVN).

It belongs to the class-II fumarase/aspartase family. Fumarase subfamily. Homotetramer.

It is found in the cytoplasm. The catalysed reaction is (S)-malate = fumarate + H2O. It participates in carbohydrate metabolism; tricarboxylic acid cycle; (S)-malate from fumarate: step 1/1. Involved in the TCA cycle. Catalyzes the stereospecific interconversion of fumarate to L-malate. The protein is Fumarate hydratase class II of Escherichia coli O6:H1 (strain CFT073 / ATCC 700928 / UPEC).